Reading from the N-terminus, the 156-residue chain is Large ribosomal subunit protein uL15 (156 aa).

Positions Met-1–Arg-16 are enriched in basic residues. The segment at Met-1 to Lys-35 is disordered.

The protein belongs to the universal ribosomal protein uL15 family. Part of the 50S ribosomal subunit.

Functionally, binds to the 23S rRNA. The polypeptide is Large ribosomal subunit protein uL15 (Pyrobaculum neutrophilum (strain DSM 2338 / JCM 9278 / NBRC 100436 / V24Sta) (Thermoproteus neutrophilus)).